The chain runs to 892 residues: Alpha-actinin-1 (892 aa).

Methionine 1 is modified (N-acetylmethionine). The actin-binding stretch occupies residues 1 to 247; that stretch reads MDHYDSQQTN…IMTYVSSFYH (247 aa). The residue at position 6 (serine 6) is a Phosphoserine. Position 12 is a phosphotyrosine; by FAK1 (tyrosine 12). Calponin-homology (CH) domains are found at residues 31–135 and 144–250; these read KQQR…LRFA and TSAK…HAFS. 2 positions are modified to N6-acetyllysine: lysine 95 and lysine 195. 4 Spectrin repeats span residues 274 to 384, 394 to 499, 509 to 620, and 630 to 733; these read QLME…WLLN, HLAE…ALER, QLYL…ALTE, and RLRK…EVEN. The segment at 274-733 is interaction with DDN; that stretch reads QLMEDYEKLA…IARTINEVEN (460 aa). Serine 471 carries the post-translational modification Phosphoserine. Lysine 676 is subject to N6-acetyllysine. Serine 677 is subject to Phosphoserine. 2 EF-hand domains span residues 746-781 and 787-822; these read EQMN…LGYD and QGEA…ETAD. Ca(2+)-binding residues include aspartate 759, aspartate 761, serine 763, threonine 765, and glutamate 770. Residue serine 890 is modified to Phosphoserine.

It belongs to the alpha-actinin family. As to quaternary structure, homodimer; antiparallel. Interacts with MYOZ2, TTID and LPP. Interacts with DDN. Interacts with PSD. Interacts with MICALL2. Interacts with DNM2 and CTTN. Interacts with PDLIM1. Interacts with PDLIM2. Interacts with PDLIM4 (via PDZ domain). Interacts with IGSF8.

The protein localises to the cytoplasm. It localises to the cytoskeleton. The protein resides in the myofibril. Its subcellular location is the sarcomere. It is found in the z line. The protein localises to the cell membrane. It localises to the cell junction. The protein resides in the cell projection. Its subcellular location is the ruffle. Functionally, F-actin cross-linking protein which is thought to anchor actin to a variety of intracellular structures. Association with IGSF8 regulates the immune synapse formation and is required for efficient T-cell activation. This Bos taurus (Bovine) protein is Alpha-actinin-1 (ACTN1).